The sequence spans 258 residues: Ubiquinone/menaquinone biosynthesis C-methyltransferase UbiE (258 aa).

Residues 1–20 (MSESRTSADGGMETSYGFRE) form a disordered region. S-adenosyl-L-methionine is bound by residues T81, D102, and 130 to 131 (NA).

This sequence belongs to the class I-like SAM-binding methyltransferase superfamily. MenG/UbiE family.

The catalysed reaction is a 2-demethylmenaquinol + S-adenosyl-L-methionine = a menaquinol + S-adenosyl-L-homocysteine + H(+). It carries out the reaction a 2-methoxy-6-(all-trans-polyprenyl)benzene-1,4-diol + S-adenosyl-L-methionine = a 5-methoxy-2-methyl-3-(all-trans-polyprenyl)benzene-1,4-diol + S-adenosyl-L-homocysteine + H(+). The protein operates within quinol/quinone metabolism; menaquinone biosynthesis; menaquinol from 1,4-dihydroxy-2-naphthoate: step 2/2. It participates in cofactor biosynthesis; ubiquinone biosynthesis. Functionally, methyltransferase required for the conversion of demethylmenaquinol (DMKH2) to menaquinol (MKH2) and the conversion of 2-polyprenyl-6-methoxy-1,4-benzoquinol (DDMQH2) to 2-polyprenyl-3-methyl-6-methoxy-1,4-benzoquinol (DMQH2). The protein is Ubiquinone/menaquinone biosynthesis C-methyltransferase UbiE of Rhizobium etli (strain ATCC 51251 / DSM 11541 / JCM 21823 / NBRC 15573 / CFN 42).